We begin with the raw amino-acid sequence, 88 residues long: Small ribosomal subunit protein bS16 (88 aa).

This sequence belongs to the bacterial ribosomal protein bS16 family.

The chain is Small ribosomal subunit protein bS16 from Mesomycoplasma hyopneumoniae (strain 232) (Mycoplasma hyopneumoniae).